We begin with the raw amino-acid sequence, 183 residues long: Peptide deformylase (183 aa).

2 residues coordinate Fe cation: C111 and H154. Residue E155 is part of the active site. Residue H158 coordinates Fe cation.

This sequence belongs to the polypeptide deformylase family. Fe(2+) serves as cofactor.

The catalysed reaction is N-terminal N-formyl-L-methionyl-[peptide] + H2O = N-terminal L-methionyl-[peptide] + formate. In terms of biological role, removes the formyl group from the N-terminal Met of newly synthesized proteins. Requires at least a dipeptide for an efficient rate of reaction. N-terminal L-methionine is a prerequisite for activity but the enzyme has broad specificity at other positions. The protein is Peptide deformylase of Staphylococcus epidermidis (strain ATCC 35984 / DSM 28319 / BCRC 17069 / CCUG 31568 / BM 3577 / RP62A).